We begin with the raw amino-acid sequence, 476 residues long: Calcium/calmodulin-dependent protein kinase type 1G (476 aa).

The Protein kinase domain occupies 23-277 (FIFMEVLGSG…CEKALRHPWI (255 aa)). Residues 29–37 (LGSGAFSEV) and Lys52 contribute to the ATP site. Residue Asp143 is the Proton acceptor of the active site. The autoinhibitory domain stretch occupies residues 277 to 317 (IDGNTALHRDIYPSVSLQIQKNFAKSKWRQAFNAAAVVHHM). Positions 297 to 318 (KNFAKSKWRQAFNAAAVVHHMR) are calmodulin-binding. The tract at residues 326–387 (SPSVRQEVEN…SSRPSAPGGR (62 aa)) is disordered.

Belongs to the protein kinase superfamily. CAMK Ser/Thr protein kinase family. CaMK subfamily. Prenylated on Cys-473.

The protein localises to the cytoplasm. Its subcellular location is the golgi apparatus membrane. The protein resides in the cell membrane. The enzyme catalyses L-seryl-[protein] + ATP = O-phospho-L-seryl-[protein] + ADP + H(+). It carries out the reaction L-threonyl-[protein] + ATP = O-phospho-L-threonyl-[protein] + ADP + H(+). Activated by Ca(2+)/calmodulin. Binding of calmodulin is thought to result in a conformational change and leads to activation through phosphorylation by CAMKK1. Calcium/calmodulin-dependent protein kinase belonging to a proposed calcium-triggered signaling cascade. In vitro phosphorylates transcription factor CREB1. The protein is Calcium/calmodulin-dependent protein kinase type 1G (Camk1g) of Rattus norvegicus (Rat).